The chain runs to 318 residues: uncharacterized protein (318 aa).

This is an uncharacterized protein from Schizosaccharomyces pombe (strain 972 / ATCC 24843) (Fission yeast).